Consider the following 146-residue polypeptide: Large ribosomal subunit protein uL15 (146 aa).

Residues 1 to 56 form a disordered region; sequence MSDIQLNTLKPAEGSKHAKRRVGRGIGSGLGKTAGRGHKGQKSRSGGFHKVGFEGG. Positions 24–34 are enriched in gly residues; the sequence is RGIGSGLGKTA.

The protein belongs to the universal ribosomal protein uL15 family. As to quaternary structure, part of the 50S ribosomal subunit.

Functionally, binds to the 23S rRNA. This chain is Large ribosomal subunit protein uL15, found in Bordetella bronchiseptica (strain ATCC BAA-588 / NCTC 13252 / RB50) (Alcaligenes bronchisepticus).